The following is a 230-amino-acid chain: 2-C-methyl-D-erythritol 4-phosphate cytidylyltransferase (230 aa).

This sequence belongs to the IspD/TarI cytidylyltransferase family. IspD subfamily.

It catalyses the reaction 2-C-methyl-D-erythritol 4-phosphate + CTP + H(+) = 4-CDP-2-C-methyl-D-erythritol + diphosphate. Its pathway is isoprenoid biosynthesis; isopentenyl diphosphate biosynthesis via DXP pathway; isopentenyl diphosphate from 1-deoxy-D-xylulose 5-phosphate: step 2/6. Catalyzes the formation of 4-diphosphocytidyl-2-C-methyl-D-erythritol from CTP and 2-C-methyl-D-erythritol 4-phosphate (MEP). The sequence is that of 2-C-methyl-D-erythritol 4-phosphate cytidylyltransferase from Synechocystis sp. (strain ATCC 27184 / PCC 6803 / Kazusa).